The sequence spans 464 residues: Ribulose bisphosphate carboxylase/oxygenase activase A, chloroplastic (464 aa).

The transit peptide at 1 to 48 (MAAAFSSTVGAPASTPTNFLGKKLKKQVTSAVNYHGKSSKANRFTVMA) directs the protein to the chloroplast. Residue 155-162 (GGKGQGKS) participates in ATP binding.

It belongs to the RuBisCO activase family.

The protein localises to the plastid. It is found in the chloroplast stroma. Its function is as follows. Activation of RuBisCO (ribulose-1,5-bisphosphate carboxylase/oxygenase; EC 4.1.1.39) involves the ATP-dependent carboxylation of the epsilon-amino group of lysine leading to a carbamate structure. This is Ribulose bisphosphate carboxylase/oxygenase activase A, chloroplastic (RCAA) from Hordeum vulgare (Barley).